Reading from the N-terminus, the 2298-residue chain is Protein Ycf2 (2298 aa).

Residue 1638–1645 coordinates ATP; that stretch reads GSIGTGRS.

The protein belongs to the Ycf2 family.

Its subcellular location is the plastid. It is found in the chloroplast stroma. Its function is as follows. Probable ATPase of unknown function. Its presence in a non-photosynthetic plant (Epifagus virginiana) and experiments in tobacco indicate that it has an essential function which is probably not related to photosynthesis. The sequence is that of Protein Ycf2 from Gossypium barbadense (Sea Island cotton).